Here is a 203-residue protein sequence, read N- to C-terminus: Guanylate kinase (203 aa).

The Guanylate kinase-like domain occupies 3 to 181 (GTLYIVAAPS…AVAEMCAIFT (179 aa)). Residue 10 to 17 (APSGAGKS) participates in ATP binding.

It belongs to the guanylate kinase family.

It is found in the cytoplasm. It carries out the reaction GMP + ATP = GDP + ADP. In terms of biological role, essential for recycling GMP and indirectly, cGMP. This is Guanylate kinase from Xanthomonas euvesicatoria pv. vesicatoria (strain 85-10) (Xanthomonas campestris pv. vesicatoria).